Here is a 257-residue protein sequence, read N- to C-terminus: MSTAANSIAFVSSDTADAKAALESLSARYGQCSVAEAVVVVALGGDGFLLQTLRDTMGTGKKVYGMNRGTIGFLMNEYRSGGLTERIAAAVAETIRPLEMLAVTSEGETVSALAINEVALWRQSYQTAKIRISVDDQIRLEELSCDGVMIATPAGSTAYNLSAHGPILPLDAPLLALTPVSPFRPRRWRGALLSNKATVRFDILEPEKRPVNAAADHTEVKAVTSVTVRESPTATATLLFDPNHSWNERILAEQFRY.

Residue Asp-46 is the Proton acceptor of the active site. NAD(+) is bound by residues Asp-46–Gly-47, Asn-116–Glu-117, Asp-146, Ala-154, and Thr-157–Ser-162.

This sequence belongs to the NAD kinase family. The cofactor is a divalent metal cation.

Its subcellular location is the cytoplasm. It carries out the reaction NAD(+) + ATP = ADP + NADP(+) + H(+). Its function is as follows. Involved in the regulation of the intracellular balance of NAD and NADP, and is a key enzyme in the biosynthesis of NADP. Catalyzes specifically the phosphorylation on 2'-hydroxyl of the adenosine moiety of NAD to yield NADP. This is NAD kinase from Mesorhizobium japonicum (strain LMG 29417 / CECT 9101 / MAFF 303099) (Mesorhizobium loti (strain MAFF 303099)).